A 220-amino-acid polypeptide reads, in one-letter code: LHFPL tetraspan subfamily member 1 protein (220 aa).

The N-terminal stretch at 1-20 (MRSSLTMVGTLWAFLSLVTA) is a signal peptide. A run of 2 helical transmembrane segments spans residues 86–106 (VVTG…VLGC) and 122–142 (AAQF…PLGW). An N-linked (GlcNAc...) asparagine glycan is attached at N153. A helical membrane pass occupies residues 165–185 (LGWAYYCAGGGAAAAMLICTW).

The protein belongs to the LHFP family. As to expression, widely expressed. Expressed at high levels in lung, thymus, skeletal muscle, colon and ovary.

Its subcellular location is the membrane. The sequence is that of LHFPL tetraspan subfamily member 1 protein from Homo sapiens (Human).